Here is a 102-residue protein sequence, read N- to C-terminus: Small ribosomal subunit protein uS10 (102 aa).

This sequence belongs to the universal ribosomal protein uS10 family. In terms of assembly, part of the 30S ribosomal subunit.

Functionally, involved in the binding of tRNA to the ribosomes. The polypeptide is Small ribosomal subunit protein uS10 (Salinispora tropica (strain ATCC BAA-916 / DSM 44818 / JCM 13857 / NBRC 105044 / CNB-440)).